Reading from the N-terminus, the 465-residue chain is L-seryl-tRNA(Sec) selenium transferase (465 aa).

Position 294 is an N6-(pyridoxal phosphate)lysine (Lys-294).

Belongs to the SelA family. The cofactor is pyridoxal 5'-phosphate.

It is found in the cytoplasm. The enzyme catalyses L-seryl-tRNA(Sec) + selenophosphate + H(+) = L-selenocysteinyl-tRNA(Sec) + phosphate. Its pathway is aminoacyl-tRNA biosynthesis; selenocysteinyl-tRNA(Sec) biosynthesis; selenocysteinyl-tRNA(Sec) from L-seryl-tRNA(Sec) (bacterial route): step 1/1. Its function is as follows. Converts seryl-tRNA(Sec) to selenocysteinyl-tRNA(Sec) required for selenoprotein biosynthesis. This chain is L-seryl-tRNA(Sec) selenium transferase, found in Maridesulfovibrio salexigens (strain ATCC 14822 / DSM 2638 / NCIMB 8403 / VKM B-1763) (Desulfovibrio salexigens).